A 296-amino-acid chain; its full sequence is MNKEQLEKMTNGKGFIAALDQSGGSTPKALKEYGVNEDEYSNDDEMFQLVHDMRTRVVTSPSFSPDKILGAILFEQTMDREVEGKYTGDYLADKGVVPFLKVDKGLAEQQNGVQLMKPIDDLDDTLDRAVERHIFGTKMRSNILELNEQGIKDVVEQQFEFAKKIIAKGLVPIIEPEVNINAKDKAEIEEVLKAELKKGLDALNDDQLVMLKLTIPTKANLYKELADHPNVVRVVVLSGGYSRDEANKLLKDNDELIASFSRALASDLRASQSQEEFDKALGDAVDSIYDASVNKN.

The active-site Proton acceptor is the glutamate 175. Lysine 212 acts as the Schiff-base intermediate with dihydroxyacetone-P in catalysis.

This sequence belongs to the class I fructose-bisphosphate aldolase family.

It catalyses the reaction beta-D-fructose 1,6-bisphosphate = D-glyceraldehyde 3-phosphate + dihydroxyacetone phosphate. Its pathway is carbohydrate degradation; glycolysis; D-glyceraldehyde 3-phosphate and glycerone phosphate from D-glucose: step 4/4. This chain is Fructose-bisphosphate aldolase class 1, found in Staphylococcus haemolyticus (strain JCSC1435).